The sequence spans 343 residues: Ferredoxin--NADP reductase (343 aa).

Residues Asp-31, Lys-39, Tyr-43, Val-83, Ile-118, Asp-285, and Ser-326 each contribute to the FAD site.

The protein belongs to the ferredoxin--NADP reductase type 2 family. In terms of assembly, homodimer. The cofactor is FAD.

It catalyses the reaction 2 reduced [2Fe-2S]-[ferredoxin] + NADP(+) + H(+) = 2 oxidized [2Fe-2S]-[ferredoxin] + NADPH. In Staphylococcus saprophyticus subsp. saprophyticus (strain ATCC 15305 / DSM 20229 / NCIMB 8711 / NCTC 7292 / S-41), this protein is Ferredoxin--NADP reductase.